The chain runs to 142 residues: Transcriptional regulator MraZ (142 aa).

SpoVT-AbrB domains lie at 5–51 and 77–120; these read ASAL…PRPE and AADV…DAAT.

It belongs to the MraZ family. Forms oligomers.

It is found in the cytoplasm. Its subcellular location is the nucleoid. The polypeptide is Transcriptional regulator MraZ (Cupriavidus taiwanensis (strain DSM 17343 / BCRC 17206 / CCUG 44338 / CIP 107171 / LMG 19424 / R1) (Ralstonia taiwanensis (strain LMG 19424))).